Here is a 239-residue protein sequence, read N- to C-terminus: MQFSIVYFLVFLIPSTQSTGFLSLKLTSDHDCLVHLEIQSMEYSETVRLLAYETKSLEIFTPEITNQLSIHFQILHHFSGVSLSDVSSQLFKLDNNGIWEPRVIDSDQVILSIQSNFHCQKGFYGPICERRSRSTSTIKTTTSIPTATSSPFHLPISEVQINNLIIYAVLSSVVLLLIIANCFLCFCRPKPSKYIDYTFQNVFPMDEFFPMEKTIGSPDTEYFDSSSRYYSTITLQSRV.

In terms of biological role, may have a role in mesendoderm development during embryogenesis. This is Skn-1 dependent zygotic transcript 1 protein from Caenorhabditis briggsae.